The following is a 661-amino-acid chain: UvrABC system protein B (661 aa).

The Helicase ATP-binding domain occupies 25–178 (EGILKGEKFQ…DEVIRDLIRM (154 aa)). 38–45 (GVTGSGKT) serves as a coordination point for ATP. The Beta-hairpin motif lies at 91–114 (YYDYYQPEAYIPETDTYIEKDSSI). Residues 429 to 591 (QIDHLIGEIR…IVPQTVRKGI (163 aa)) form the Helicase C-terminal domain. The region spanning 625–660 (EEYIKELEQEMKKLAIELEFEKAAKVRDKIFELKKL) is the UVR domain.

It belongs to the UvrB family. As to quaternary structure, forms a heterotetramer with UvrA during the search for lesions. Interacts with UvrC in an incision complex.

The protein localises to the cytoplasm. In terms of biological role, the UvrABC repair system catalyzes the recognition and processing of DNA lesions. A damage recognition complex composed of 2 UvrA and 2 UvrB subunits scans DNA for abnormalities. Upon binding of the UvrA(2)B(2) complex to a putative damaged site, the DNA wraps around one UvrB monomer. DNA wrap is dependent on ATP binding by UvrB and probably causes local melting of the DNA helix, facilitating insertion of UvrB beta-hairpin between the DNA strands. Then UvrB probes one DNA strand for the presence of a lesion. If a lesion is found the UvrA subunits dissociate and the UvrB-DNA preincision complex is formed. This complex is subsequently bound by UvrC and the second UvrB is released. If no lesion is found, the DNA wraps around the other UvrB subunit that will check the other stand for damage. The sequence is that of UvrABC system protein B from Caldicellulosiruptor bescii (strain ATCC BAA-1888 / DSM 6725 / KCTC 15123 / Z-1320) (Anaerocellum thermophilum).